The primary structure comprises 240 residues: tRNA (guanine-N(1)-)-methyltransferase (240 aa).

Residues Gly-110 and 129–134 each bind S-adenosyl-L-methionine; that span reads LGDFVL.

This sequence belongs to the RNA methyltransferase TrmD family. As to quaternary structure, homodimer.

Its subcellular location is the cytoplasm. It carries out the reaction guanosine(37) in tRNA + S-adenosyl-L-methionine = N(1)-methylguanosine(37) in tRNA + S-adenosyl-L-homocysteine + H(+). Functionally, specifically methylates guanosine-37 in various tRNAs. This is tRNA (guanine-N(1)-)-methyltransferase from Clostridium botulinum (strain 657 / Type Ba4).